Here is a 579-residue protein sequence, read N- to C-terminus: Basic helix-loop-helix ARNT-like protein 2 (579 aa).

Positions 1–198 are interaction with PER2; the sequence is MEFPRKRRGR…SPREKPIDTK (198 aa). The short motif at 4–9 is the Nuclear localization signal element; that stretch reads PRKRRG. Residues 40 to 61 are disordered; sequence RTGVSAPSGIREAHSQMEKRRR. Residues 48–101 form the bHLH domain; it reads GIREAHSQMEKRRRDKMNHLIQKLSSMIPPHIPTAHKLDKLSVLRRAVQYLRSL. Over residues 50–59 the composition is skewed to basic and acidic residues; the sequence is REAHSQMEKR. The Nuclear export signal 1 signature appears at 118–128; the sequence is IQDKELSHLIL. Residues 119-190 enclose the PAS 1 domain; it reads QDKELSHLIL…KEQLSCDGSP (72 aa). The segment covering 186-196 has biased composition (basic and acidic residues); sequence CDGSPREKPID. Residues 186–213 form a disordered region; sequence CDGSPREKPIDTKTSQVYSHPYTGRPRM. Lys226 is covalently cross-linked (Glycyl lysine isopeptide (Lys-Gly) (interchain with G-Cter in SUMO2 and SUMO3)). A Glycyl lysine isopeptide (Lys-Gly) (interchain with G-Cter in SUMO2) cross-link involves residue Lys233. The 71-residue stretch at 296–366 folds into the PAS 2 domain; the sequence is VPQKSGKINV…DKHKAVLQSK (71 aa). The Nuclear export signal 2 signature appears at 331–339; the sequence is LGYLPQELL. A PAC domain is found at 371–414; the sequence is TDSYKFRVKDGAFVTLKSEWFSFTNPWTKELEYIVSVNTLVLGR. Residues 469 to 536 form a disordered region; sequence RLHSSSPEDA…AHPHGPLPGD (68 aa).

Component of the circadian core oscillator, which includes the CRY proteins, CLOCK, or NPAS2, BMAL1 or BMAL2, CSNK1D and/or CSNK1E, TIMELESS and the PER proteins. Interacts directly with CLOCK to form the BMAL2-CLOCK transactivator. Can form heterodimers or homodimers which interact directly with CLOCK to form the transcription activator. Interacts with NPAS2 and HIF1A. Interacts with PER2. Expressed in the suprachiasmatic nucleus (SCN).

It localises to the nucleus. Transcriptional activator which forms a core component of the circadian clock. The circadian clock, an internal time-keeping system, regulates various physiological processes through the generation of approximately 24 hour circadian rhythms in gene expression, which are translated into rhythms in metabolism and behavior. It is derived from the Latin roots 'circa' (about) and 'diem' (day) and acts as an important regulator of a wide array of physiological functions including metabolism, sleep, body temperature, blood pressure, endocrine, immune, cardiovascular, and renal function. Consists of two major components: the central clock, residing in the suprachiasmatic nucleus (SCN) of the brain, and the peripheral clocks that are present in nearly every tissue and organ system. Both the central and peripheral clocks can be reset by environmental cues, also known as Zeitgebers (German for 'timegivers'). The predominant Zeitgeber for the central clock is light, which is sensed by retina and signals directly to the SCN. The central clock entrains the peripheral clocks through neuronal and hormonal signals, body temperature and feeding-related cues, aligning all clocks with the external light/dark cycle. Circadian rhythms allow an organism to achieve temporal homeostasis with its environment at the molecular level by regulating gene expression to create a peak of protein expression once every 24 hours to control when a particular physiological process is most active with respect to the solar day. Transcription and translation of core clock components (CLOCK, NPAS2, BMAL1, BMAL2, PER1, PER2, PER3, CRY1 and CRY2) plays a critical role in rhythm generation, whereas delays imposed by post-translational modifications (PTMs) are important for determining the period (tau) of the rhythms (tau refers to the period of a rhythm and is the length, in time, of one complete cycle). A diurnal rhythm is synchronized with the day/night cycle, while the ultradian and infradian rhythms have a period shorter and longer than 24 hours, respectively. Disruptions in the circadian rhythms contribute to the pathology of cardiovascular diseases, cancer, metabolic syndromes and aging. A transcription/translation feedback loop (TTFL) forms the core of the molecular circadian clock mechanism. Transcription factors, CLOCK or NPAS2 and BMAL1 or BMAL2, form the positive limb of the feedback loop, act in the form of a heterodimer and activate the transcription of core clock genes and clock-controlled genes (involved in key metabolic processes), harboring E-box elements (5'-CACGTG-3') within their promoters. The core clock genes: PER1/2/3 and CRY1/2 which are transcriptional repressors form the negative limb of the feedback loop and interact with the CLOCK|NPAS2-BMAL1|BMAL2 heterodimer inhibiting its activity and thereby negatively regulating their own expression. This heterodimer also activates nuclear receptors NR1D1/2 and RORA/B/G, which form a second feedback loop and which activate and repress BMAL1 transcription, respectively. The CLOCK-BMAL2 heterodimer activates the transcription of SERPINE1/PAI1 and BHLHE40/DEC1. This is Basic helix-loop-helix ARNT-like protein 2 (Bmal2) from Mus musculus (Mouse).